Consider the following 122-residue polypeptide: Large ribosomal subunit protein uL14c (122 aa).

It belongs to the universal ribosomal protein uL14 family. As to quaternary structure, part of the 50S ribosomal subunit.

It localises to the plastid. The protein localises to the cyanelle. Its function is as follows. Binds to 23S rRNA. This chain is Large ribosomal subunit protein uL14c, found in Cyanophora paradoxa.